The chain runs to 208 residues: V-type ATP synthase subunit D (208 aa).

The protein belongs to the V-ATPase D subunit family.

Its function is as follows. Produces ATP from ADP in the presence of a proton gradient across the membrane. This is V-type ATP synthase subunit D from Streptococcus pyogenes serotype M3 (strain ATCC BAA-595 / MGAS315).